A 734-amino-acid chain; its full sequence is Photosystem I P700 chlorophyll a apoprotein A2 (734 aa).

8 helical membrane-spanning segments follow: residues I46–A69, L135–Q158, L175–I199, M273–Y291, L330–Y353, A369–I395, A417–H439, and F517–V535. 2 residues coordinate [4Fe-4S] cluster: C559 and C568. Helical transmembrane passes span A575–W596 and L643–I665. Chlorophyll a contacts are provided by H654, M662, and Y670. W671 serves as a coordination point for phylloquinone. The helical transmembrane segment at L707 to A727 threads the bilayer.

This sequence belongs to the PsaA/PsaB family. The PsaA/B heterodimer binds the P700 chlorophyll special pair and subsequent electron acceptors. PSI consists of a core antenna complex that captures photons, and an electron transfer chain that converts photonic excitation into a charge separation. The eukaryotic PSI reaction center is composed of at least 11 subunits. P700 is a chlorophyll a/chlorophyll a' dimer, A0 is one or more chlorophyll a, A1 is one or both phylloquinones and FX is a shared 4Fe-4S iron-sulfur center. serves as cofactor.

The protein localises to the plastid. It is found in the chloroplast thylakoid membrane. The catalysed reaction is reduced [plastocyanin] + hnu + oxidized [2Fe-2S]-[ferredoxin] = oxidized [plastocyanin] + reduced [2Fe-2S]-[ferredoxin]. PsaA and PsaB bind P700, the primary electron donor of photosystem I (PSI), as well as the electron acceptors A0, A1 and FX. PSI is a plastocyanin/cytochrome c6-ferredoxin oxidoreductase, converting photonic excitation into a charge separation, which transfers an electron from the donor P700 chlorophyll pair to the spectroscopically characterized acceptors A0, A1, FX, FA and FB in turn. Oxidized P700 is reduced on the lumenal side of the thylakoid membrane by plastocyanin or cytochrome c6. The chain is Photosystem I P700 chlorophyll a apoprotein A2 from Gracilaria tenuistipitata var. liui (Red alga).